Here is a 168-residue protein sequence, read N- to C-terminus: Cytochrome c-type biogenesis protein CcmE (168 aa).

The Cytoplasmic portion of the chain corresponds to 1-7 (MTRKQRR). Residues 8–28 (LMLIGVCGAVLAVALGLVLWA) traverse the membrane as a helical; Signal-anchor for type II membrane protein segment. Topologically, residues 29-168 (MRGTIVFFRS…SGEKPALRQQ (140 aa)) are periplasmic. Residues His-122 and Tyr-126 each coordinate heme. The interval 134–168 (ALKKQGHWQGEAKHPGGTAPAPQTASGEKPALRQQ) is disordered.

Belongs to the CcmE/CycJ family.

Its subcellular location is the cell inner membrane. In terms of biological role, heme chaperone required for the biogenesis of c-type cytochromes. Transiently binds heme delivered by CcmC and transfers the heme to apo-cytochromes in a process facilitated by CcmF and CcmH. This Methylobacterium nodulans (strain LMG 21967 / CNCM I-2342 / ORS 2060) protein is Cytochrome c-type biogenesis protein CcmE.